Consider the following 438-residue polypeptide: Transposon Ty2-LR1 Gag polyprotein (438 aa).

3 stretches are compositionally biased toward polar residues: residues 1–11, 19–39, and 49–60; these read MESQQLHQNPH, ASVT…SASN, and KVNSQQETTPGT. 3 disordered regions span residues 1-86, 364-397, and 419-438; these read MESQ…GQYQ, KNVS…AKAH, and SSQY…TERI. Positions 295 to 397 are RNA-binding; that stretch reads ENNINVSDRL…SSKPRAAKAH (103 aa). A compositionally biased stretch (low complexity) spans 369–381; sequence TSPNTTNTKVTTR.

Homotrimer.

Its subcellular location is the cytoplasm. Its function is as follows. Capsid protein (CA) is the structural component of the virus-like particle (VLP), forming the shell that encapsulates the retrotransposons dimeric RNA genome. The particles are assembled from trimer-clustered units and there are holes in the capsid shells that allow for the diffusion of macromolecules. CA also has nucleocapsid-like chaperone activity, promoting primer tRNA(i)-Met annealing to the multipartite primer-binding site (PBS), dimerization of Ty2 RNA and initiation of reverse transcription. This chain is Transposon Ty2-LR1 Gag polyprotein (TY2A-LR1), found in Saccharomyces cerevisiae (strain ATCC 204508 / S288c) (Baker's yeast).